Reading from the N-terminus, the 606-residue chain is Alpha-1,2-mannosyltransferase MNN23 (606 aa).

Residues 1–14 (MSINFLSIPRNRFK) are Cytoplasmic-facing. The chain crosses the membrane as a helical span at residues 15 to 35 (AIGVLSVTCILIYVILHSSII). Topologically, residues 36-606 (TTDFDVSDYG…QVAWLSKSQN (571 aa)) are extracellular. A disordered region spans residues 59 to 86 (DNGENLKDPQPELDNDKGNGETDTTTSN). Over residues 62-78 (ENLKDPQPELDNDKGNG) the composition is skewed to basic and acidic residues.

It belongs to the MNN1/MNT family.

The protein resides in the golgi apparatus membrane. It functions in the pathway protein modification; protein glycosylation. Alpha-1,2-mannosyltransferase required for cell wall integrity. Responsible for addition of the first alpha-1,2-linked mannose to form the branches on the mannan backbone of oligosaccharides. Addition of alpha-1,2-mannose is required for stabilization of the alpha-1,6-mannose backbone and hence regulates mannan fibril length; and is important for both immune recognition and virulence. The chain is Alpha-1,2-mannosyltransferase MNN23 (MNN23) from Candida albicans (strain SC5314 / ATCC MYA-2876) (Yeast).